The following is an 852-amino-acid chain: Disks large homolog 2 (852 aa).

2 S-palmitoyl cysteine lipidation sites follow: cysteine 5 and cysteine 7. Serine 28 carries the post-translational modification Phosphoserine. Tyrosine 58 is subject to Phosphotyrosine. The residue at position 65 (serine 65) is a Phosphoserine. PDZ domains follow at residues glutamate 98–arginine 184 and glutamate 193–proline 279. Phosphoserine is present on residues serine 307, serine 328, serine 360, serine 365, serine 406, and serine 414. The PDZ 3 domain maps to lysine 421–glutamine 501. Tyrosine 505 bears the Phosphotyrosine mark. A phosphoserine mark is found at serine 528, serine 530, and serine 553. Residues lysine 536–glutamate 606 form the SH3 domain. Residues threonine 662 to glutamate 837 form the Guanylate kinase-like domain. Phosphotyrosine is present on residues tyrosine 732 and tyrosine 737.

It belongs to the MAGUK family. As to quaternary structure, interacts through its PDZ domains with NETO1. Interacts with NOS1/nNOS through second PDZ domain. Interacts with KCNJ2/Kir2.1 (via C-terminus) through one of its PDZ domains. Interacts with KCNJ4. Interacts with FRMPD4 (via C-terminus). Interacts with LRFN1. Interacts with LRFN2 and LRFN4. Interacts with FASLG. Interacts with ADAM22. Interacts with DGKI (via PDZ-binding motif). Palmitoylation of isoform 1 and isoform 2 is not required for targeting to postsynaptic density. As to expression, detected in juxtaparanodal zones in the central nervous system and at nerve terminal plexuses of basket cells in the cerebellum (at protein level). Brain. High levels in cerebellar Purkinje cells. Expressed in pyramidal cells of the Ammons's horn and granular cells of the dentate gyrus in the hippocampus as well as cerebral cortex and striatum. High levels in dorsal horn of spinal cord.

It localises to the cell membrane. The protein resides in the postsynaptic density. Its subcellular location is the synapse. The protein localises to the cell projection. It is found in the axon. It localises to the membrane. The protein resides in the perikaryon. Its function is as follows. Required for perception of chronic pain through NMDA receptor signaling. Regulates surface expression of NMDA receptors in dorsal horn neurons of the spinal cord. Interacts with the cytoplasmic tail of NMDA receptor subunits as well as inward rectifying potassium channels. Involved in regulation of synaptic stability at cholinergic synapses. Part of the postsynaptic protein scaffold of excitatory synapses. The polypeptide is Disks large homolog 2 (Dlg2) (Rattus norvegicus (Rat)).